A 186-amino-acid polypeptide reads, in one-letter code: Elongation factor P (186 aa).

The protein belongs to the elongation factor P family.

Its subcellular location is the cytoplasm. Its pathway is protein biosynthesis; polypeptide chain elongation. Its function is as follows. Involved in peptide bond synthesis. Stimulates efficient translation and peptide-bond synthesis on native or reconstituted 70S ribosomes in vitro. Probably functions indirectly by altering the affinity of the ribosome for aminoacyl-tRNA, thus increasing their reactivity as acceptors for peptidyl transferase. In Elusimicrobium minutum (strain Pei191), this protein is Elongation factor P.